The following is a 188-amino-acid chain: Protein GrpE (188 aa).

Residues 1-16 show a composition bias toward basic and acidic residues; sequence MEERNEQVVEEVKEAQ. Residues 1–31 form a disordered region; it reads MEERNEQVVEEVKEAQVEEAVTPENSEETVE.

The protein belongs to the GrpE family. As to quaternary structure, homodimer.

It is found in the cytoplasm. Its function is as follows. Participates actively in the response to hyperosmotic and heat shock by preventing the aggregation of stress-denatured proteins, in association with DnaK and GrpE. It is the nucleotide exchange factor for DnaK and may function as a thermosensor. Unfolded proteins bind initially to DnaJ; upon interaction with the DnaJ-bound protein, DnaK hydrolyzes its bound ATP, resulting in the formation of a stable complex. GrpE releases ADP from DnaK; ATP binding to DnaK triggers the release of the substrate protein, thus completing the reaction cycle. Several rounds of ATP-dependent interactions between DnaJ, DnaK and GrpE are required for fully efficient folding. This Bacillus anthracis protein is Protein GrpE.